The following is a 464-amino-acid chain: Lysosomal proton-coupled steroid conjugate and bile acid symporter SLC46A3 (464 aa).

A signal peptide spans 1–26 (MRKVLLVEPVIFIYIFASSLTSPVVQ). Topologically, residues 27-71 (QFIYRKLWEEEYNSTAISSDNSSHCERNKSSPTYVMEKAIQEKTS) are extracellular. N-linked (GlcNAc...) asparagine glycosylation is found at N39, N47, and N54. A helical membrane pass occupies residues 72-92 (FFNMQLDLTGAVPSLIVAFII). The Cytoplasmic portion of the chain corresponds to 93-104 (VANGDHQGRKKS). A helical transmembrane segment spans residues 105-125 (LVLPSIGALIADIFLTIVSYF). Over 126–130 (SWPTS) the chain is Extracellular. The helical transmembrane segment at 131–151 (VLFLATFISGLFGSMATFLGG) threads the bilayer. The Cytoplasmic portion of the chain corresponds to 152-171 (GFAYIADQCHDEKQKTTRIA). Residues 172 to 192 (VIDLIFGVVSGLAGLSSGYFL) form a helical membrane-spanning segment. The Extracellular portion of the chain corresponds to 193–198 (REMGFT). The helical transmembrane segment at 199–219 (WTFATASLLHVVNIIYITFFL) threads the bilayer. Residues 220-259 (QDTVHISEFQQQAPLSYKEHLKETFSGVYMLFKTAPSKKR) are Cytoplasmic-facing. Residues 260-280 (ILIIVLLFIFMTYLFTMFGGS) traverse the membrane as a helical segment. At 281–296 (SLFTLYELDEPLCWTE) the chain is on the extracellular side. Residues 297–317 (VYIGYGAAAFTSISLTSFLGV) form a helical membrane-spanning segment. At 318–326 (YLFSKCLKD) the chain is on the cytoplasmic side. A helical membrane pass occupies residues 327-347 (IYIVFIGIFSYIGGIVMAAFA). The Extracellular portion of the chain corresponds to 348-349 (KT). Residues 350–370 (TLLMFLVRVPSLFSIMPIPVL) form a helical membrane-spanning segment. Topologically, residues 371–384 (RSMLSKVVLPSEQG) are cytoplasmic. A helical membrane pass occupies residues 385–405 (AVFACIACLEVLTGTISLSVF). Residues 406-418 (NVIYAATVAWFSG) are Extracellular-facing. Residues 419-439 (FSFLLSASLCLIPLGVLCWLL) traverse the membrane as a helical segment. At 440-464 (CTSWNGEDLALLVPEEVSSIDSVDS) the chain is on the cytoplasmic side.

This sequence belongs to the major facilitator superfamily. SLC46A family.

Its subcellular location is the lysosome membrane. It catalyses the reaction estrone 3-sulfate(out) + n H(+)(out) = estrone 3-sulfate(in) + n H(+)(in). The enzyme catalyses 25-hydroxyvitamin D3 sulfate(out) + n H(+)(out) = 25-hydroxyvitamin D3 sulfate(in) + n H(+)(in). It carries out the reaction cholate(out) + n H(+)(out) = cholate(in) + n H(+)(in). The catalysed reaction is glycocholate(out) + n H(+)(out) = glycocholate(in) + n H(+)(in). It catalyses the reaction taurocholate(out) + n H(+)(out) = taurocholate(in) + n H(+)(in). The enzyme catalyses dehydroepiandrosterone 3-sulfate(out) + n H(+)(out) = dehydroepiandrosterone 3-sulfate(in) + n H(+)(in). In terms of biological role, lysosomal proton-coupled steroid conjugate and bile acid transporter. Preferentially recognizes lipophilic steroid conjugates or bile acis as endogenous substrates and seems to mediate escape from lysosomes to the cytoplasm. Modulates hepatic cytosolic copper homeostasis, maybe acting as a lysosomal copper transporter and sequestering copper ions in the lysosome. This Gallus gallus (Chicken) protein is Lysosomal proton-coupled steroid conjugate and bile acid symporter SLC46A3 (SLC46A3).